The primary structure comprises 350 residues: MRVIDGSYGEGGGQILRTAVALSVITGEPIKIINIRAKRSNPGLRPQHLHGILALKELSDAKVKGAKEGSTELEFYPKSTRVRHVKVLIKTAGSISLVLQALLPAMVFAEEEVTFEITGGTDVAWSPPVDYLKHITLYALEKLGIKVEIEIRRRGHYPRGGGFVIGKVYPWGTKRPLVARTFDKIYSFEGISHAVRLPSHVAIRQAKAAKEALERVYPSIPIKIHEEYYEQGKDPHFGPGSGIVIWANTDVLRLGGDALGERGKPAEIVGREAAKALIEQLGPRHAVDKFLGDQLIPFLTFAGGDIWVSEVTKHLITNVWVVEQFFGRVFEMEGEIGKPGKVRVVKKVEL.

Residues Gln100 and 290 to 294 (FLGDQ) each bind ATP. The Tele-AMP-histidine intermediate role is filled by His314.

This sequence belongs to the RNA 3'-terminal cyclase family. Type 1 subfamily.

It localises to the cytoplasm. It carries out the reaction a 3'-end 3'-phospho-ribonucleotide-RNA + ATP = a 3'-end 2',3'-cyclophospho-ribonucleotide-RNA + AMP + diphosphate. Functionally, catalyzes the conversion of 3'-phosphate to a 2',3'-cyclic phosphodiester at the end of RNA. The mechanism of action of the enzyme occurs in 3 steps: (A) adenylation of the enzyme by ATP; (B) transfer of adenylate to an RNA-N3'P to produce RNA-N3'PP5'A; (C) and attack of the adjacent 2'-hydroxyl on the 3'-phosphorus in the diester linkage to produce the cyclic end product. The biological role of this enzyme is unknown but it is likely to function in some aspects of cellular RNA processing. The chain is RNA 3'-terminal phosphate cyclase from Thermococcus sibiricus (strain DSM 12597 / MM 739).